A 374-amino-acid chain; its full sequence is Translocating chain-associated membrane protein 1 (374 aa).

The Cytoplasmic portion of the chain corresponds to 1–29 (MAIRKKSTKSPPVLSHEFVLQNHADIVSC). Residues 30-50 (VAMVFLLGLMFEITAKASIIF) traverse the membrane as a helical segment. The Lumenal portion of the chain corresponds to 51–76 (VTLQYNVTLPATEEQATESASLYYYG). An N-linked (GlcNAc...) asparagine glycan is attached at N56. The helical transmembrane segment at 77–97 (IKDLATVFFYMLVAIIIHAVI) threads the bilayer. The Cytoplasmic portion of the chain corresponds to 98 to 121 (QEYMLDKINRRMHFSKTKHSKFNE). The 210-residue stretch at 117–326 (SKFNESGQLS…NFQLRRWREH (210 aa)) folds into the TLC domain. Residues 122-142 (SGQLSAFYLFACVWGTFILIS) traverse the membrane as a helical segment. Residues 143 to 159 (ENYISDPTILWRAYPHN) lie on the Lumenal side of the membrane. The chain crosses the membrane as a helical span at residues 160 to 180 (LMTFQMKFFYISQLAYWLHAF). The Cytoplasmic portion of the chain corresponds to 181-192 (PELYFQKTKRED). Residues 193 to 213 (IPRQLVYIGLYLFHIAGAYLL) form a helical membrane-spanning segment. A topological domain (lumenal) is located at residue N214. Residues 215–235 (LNHLGLVLLVLHYFVEFLFHI) traverse the membrane as a helical segment. At 236 to 251 (SRLFYFSNEKYQKGFS) the chain is on the cytoplasmic side. The chain crosses the membrane as a helical span at residues 252–272 (LWAVLFVLGRLLTLILSVLTV). Over 273–297 (GFGLARAENQKLDFSTGNFNVLAVR) the chain is Lumenal. A helical transmembrane segment spans residues 298–318 (IAVLASICITQAFMVWKFINF). The Cytoplasmic segment spans residues 319–374 (QLRRWREHSAFQAPAVKKKPTVTKGRSSKKGTENGVNGTLTSNVADSPRNKKEKSS). The segment covering 334–347 (VKKKPTVTKGRSSK) has biased composition (basic residues). Residues 334-374 (VKKKPTVTKGRSSKKGTENGVNGTLTSNVADSPRNKKEKSS) form a disordered region. The span at 352-363 (NGVNGTLTSNVA) shows a compositional bias: polar residues. S365 bears the Phosphoserine mark.

The protein belongs to the TRAM family. As to quaternary structure, interacts with SEC61B. May interact with Derlin-1/DERL1. N-glycosylated.

It localises to the endoplasmic reticulum membrane. Its function is as follows. Involved in the translocation of nascent protein chains into or through the endoplasmic reticulum (ER) membrane by facilitating the proper chain positioning at the SEC61 channel. Regulates the exposure of nascent secretory protein chain to the cytosol during translocation into the ER. May affect the phospholipid bilayer in the vicinity of the lateral gate of the SEC61 channel, thereby facilitating ER protein transport. Intimately associates with transmembrane (TM) domain of nascent membrane proteins during the entire integration process into the ER membrane. Associates with the second TM domain of G-protein-coupled receptor opsin/OPSD nascent chain in the ER membrane, which may facilitate its integration into the membrane. Under conditions of ER stress, participates in the disposal of misfolded ER membrane proteins during the unfolded protein response (UPR), an integrated stress response (ISR) pathway, by selectively retrotranslocating misfolded ER-membrane proteins from the ER into the cytosol where they are ubiquitinated and degraded by the proteasome. This Pongo abelii (Sumatran orangutan) protein is Translocating chain-associated membrane protein 1 (TRAM1).